Here is a 142-residue protein sequence, read N- to C-terminus: Large ribosomal subunit protein uL13 (142 aa).

Belongs to the universal ribosomal protein uL13 family. As to quaternary structure, part of the 50S ribosomal subunit.

Its function is as follows. This protein is one of the early assembly proteins of the 50S ribosomal subunit, although it is not seen to bind rRNA by itself. It is important during the early stages of 50S assembly. This chain is Large ribosomal subunit protein uL13, found in Stenotrophomonas maltophilia (strain K279a).